Consider the following 585-residue polypeptide: Probable monoterpene synthase MTS1, chloroplastic (585 aa).

Residues 1 to 29 (MSLSGVPLSAGLAPSPSNKPTNGKGQNIV) form a disordered region. A chloroplast-targeting transit peptide spans 1–31 (MSLSGVPLSAGLAPSPSNKPTNGKGQNIVRR). Residues 15 to 25 (SPSNKPTNGKG) are compositionally biased toward polar residues. Residues R298, D335, D339, R476, and D479 each coordinate (2E)-geranyl diphosphate. Mg(2+) is bound by residues D335 and D339. The DDXXD motif signature appears at 335–339 (DDIYD). Mg(2+) contacts are provided by D479, T483, and E487.

Belongs to the terpene synthase family. Tpsb subfamily. Mg(2+) is required as a cofactor. The cofactor is Mn(2+). As to expression, expressed in trichomes. Detected in flowers, but not in leaves.

It localises to the plastid. The protein resides in the chloroplast. The protein is Probable monoterpene synthase MTS1, chloroplastic of Humulus lupulus (European hop).